Here is a 126-residue protein sequence, read N- to C-terminus: Protein ApaG (126 aa).

The region spanning 2–126 is the ApaG domain; sequence SQVESPIKIK…FRLAVPGIFQ (125 aa).

In Shewanella frigidimarina (strain NCIMB 400), this protein is Protein ApaG.